The sequence spans 88 residues: Cytochrome c oxidase subunit 6B2 (88 aa).

In terms of domain architecture, CHCH spans 29–75 (TRNCYQNFLDYHRCIKTMNRRGKSTQPCEYYFRVYHSLCPISWVQRW). The Cx9C motif motif lies at 32–42 (CYQNFLDYHRC). 2 disulfides stabilise this stretch: C32/C67 and C42/C56. The Cx10C motif motif lies at 56-67 (CEYYFRVYHSLC).

The protein belongs to the cytochrome c oxidase subunit 6B family. In terms of assembly, component of the cytochrome c oxidase (complex IV, CIV), a multisubunit enzyme composed of 14 subunits. The complex is composed of a catalytic core of 3 subunits MT-CO1, MT-CO2 and MT-CO3, encoded in the mitochondrial DNA, and 11 supernumerary subunits COX4I1 (or COX4I2), COX5A, COX5B, COX6A2 (or COX6A1), COX6B1 (or COX6B2), COX6C, COX7A1 (or COX7A2), COX7B, COX7C, COX8B and NDUFA4, which are encoded in the nuclear genome. The complex exists as a monomer or a dimer and forms supercomplexes (SCs) in the inner mitochondrial membrane with NADH-ubiquinone oxidoreductase (complex I, CI) and ubiquinol-cytochrome c oxidoreductase (cytochrome b-c1 complex, complex III, CIII), resulting in different assemblies (supercomplex SCI(1)III(2)IV(1) and megacomplex MCI(2)III(2)IV(2)). As to expression, testis specific.

The protein resides in the mitochondrion inner membrane. Its pathway is energy metabolism; oxidative phosphorylation. Component of the cytochrome c oxidase, the last enzyme in the mitochondrial electron transport chain which drives oxidative phosphorylation. The respiratory chain contains 3 multisubunit complexes succinate dehydrogenase (complex II, CII), ubiquinol-cytochrome c oxidoreductase (cytochrome b-c1 complex, complex III, CIII) and cytochrome c oxidase (complex IV, CIV), that cooperate to transfer electrons derived from NADH and succinate to molecular oxygen, creating an electrochemical gradient over the inner membrane that drives transmembrane transport and the ATP synthase. Cytochrome c oxidase is the component of the respiratory chain that catalyzes the reduction of oxygen to water. Electrons originating from reduced cytochrome c in the intermembrane space (IMS) are transferred via the dinuclear copper A center (CU(A)) of subunit 2 and heme A of subunit 1 to the active site in subunit 1, a binuclear center (BNC) formed by heme A3 and copper B (CU(B)). The BNC reduces molecular oxygen to 2 water molecules using 4 electrons from cytochrome c in the IMS and 4 protons from the mitochondrial matrix. This is Cytochrome c oxidase subunit 6B2 (COX6B2) from Bos taurus (Bovine).